The primary structure comprises 145 residues: Hemoglobin fetal subunit beta (145 aa).

In terms of domain architecture, Globin spans 1-145; it reads MLSAEEKASV…VANALAHRYH (145 aa). H62 and H91 together coordinate heme b.

It belongs to the globin family. In terms of assembly, heterotetramer of two alpha chains and two beta chains. As to expression, red blood cells.

In terms of biological role, involved in oxygen transport from the lung to the various peripheral tissues. This Capra hircus (Goat) protein is Hemoglobin fetal subunit beta.